Consider the following 316-residue polypeptide: Erythritol catabolism regulatory protein EryD (316 aa).

Positions 23–42 form a DNA-binding region, H-T-H motif; the sequence is QSAVAKRLGLPSVKAHRLIA.

Belongs to the SorC transcriptional regulatory family.

With respect to regulation, erythritol may act as an inducer, probably by binding to EryD and inhibiting its repressor activity. Its function is as follows. Represses the expression of the eryABCD operon, which is involved in erythritol catabolism. This chain is Erythritol catabolism regulatory protein EryD, found in Brucella abortus (strain 2308).